The primary structure comprises 258 residues: Caffeoyl-CoA O-methyltransferase 1 (258 aa).

A compositionally biased stretch (low complexity) spans 1–16 (MATTATEAAPAQEQQA). The interval 1–31 (MATTATEAAPAQEQQANGNGEQKTRHSEVGH) is disordered. Residues 22–31 (QKTRHSEVGH) are compositionally biased toward basic and acidic residues. K32 contacts substrate. S-adenosyl-L-methionine is bound by residues T74, E96, 98–99 (GV), S104, D122, and A151. Residue D174 coordinates substrate. D174 lines the a divalent metal cation pocket. Residue D176 coordinates S-adenosyl-L-methionine. A divalent metal cation-binding residues include D200 and N201. Residue N205 coordinates substrate.

Belongs to the class I-like SAM-binding methyltransferase superfamily. Cation-dependent O-methyltransferase family. CCoAMT subfamily. A divalent metal cation is required as a cofactor.

The catalysed reaction is (E)-caffeoyl-CoA + S-adenosyl-L-methionine = (E)-feruloyl-CoA + S-adenosyl-L-homocysteine + H(+). Its pathway is aromatic compound metabolism; phenylpropanoid biosynthesis. Functionally, methylates caffeoyl-CoA to feruloyl-CoA and 5-hydroxyferuloyl-CoA to sinapoyl-CoA. Plays a role in the synthesis of feruloylated polysaccharides. Involved in the reinforcement of the plant cell wall. Also involved in the responding to wounding or pathogen challenge by the increased formation of cell wall-bound ferulic acid polymers. The sequence is that of Caffeoyl-CoA O-methyltransferase 1 (CCOAOMT1) from Zea mays (Maize).